Reading from the N-terminus, the 307-residue chain is Serine/threonine-protein phosphatase PP2A-5 catalytic subunit (307 aa).

Mn(2+)-binding residues include aspartate 55, histidine 57, aspartate 83, and asparagine 115. Histidine 116 functions as the Proton donor in the catalytic mechanism. Positions 165 and 239 each coordinate Mn(2+). Leucine methyl ester is present on leucine 307.

Belongs to the PPP phosphatase family. PP-2A subfamily. PP2A consists of a common heterodimeric core enzyme, composed of a 36 kDa catalytic subunit (subunit C) and a 65 kDa constant regulatory subunit (subunit A), that associates with a variety of regulatory subunits such as subunits B (the R2/B/PR55/B55, R3/B''/PR72/PR130/PR59 and R5/B'/B56 families). Also interacts with CHIP and TAF12B. Interacts with B'THETA. Interacts with CLC-A, CLC-B, CLC-C and CLC-G. Mn(2+) is required as a cofactor. In terms of processing, reversibly methyl esterified on Leu-307 by leucine carboxyl methyltransferase 1 (LCMT1) and pectin methylesterase 1 (PME1). Carboxyl methylation influences the affinity of the catalytic subunit for the different regulatory subunits, thereby modulating the PP2A holoenzyme's substrate specificity, enzyme activity and cellular localization. Post-translationally, phosphorylation of either threonine (by autophosphorylation-activated protein kinase) or tyrosine results in inactivation of the phosphatase. Auto-dephosphorylation has been suggested as a mechanism for reactivation. Ubiquitinated. CHIP-mediated ubiquitination enhances phosphatase activity after an abiotic stress such as low temperature or darkness.

It localises to the cytoplasm. The protein localises to the cytosol. It is found in the peroxisome. The enzyme catalyses O-phospho-L-seryl-[protein] + H2O = L-seryl-[protein] + phosphate. The catalysed reaction is O-phospho-L-threonyl-[protein] + H2O = L-threonyl-[protein] + phosphate. In terms of biological role, associates with the serine/threonine-protein phosphatase PP2A regulatory subunits A and B' to positively regulates beta-oxidation of fatty acids and protoauxins in peroxisomes by dephosphorylating peroxisomal beta-oxidation-related proteins. Involved in the positive regulation of salt stress responses. May function by increasing chloride channel activities on vacuolar membranes. The sequence is that of Serine/threonine-protein phosphatase PP2A-5 catalytic subunit from Arabidopsis thaliana (Mouse-ear cress).